The following is a 444-amino-acid chain: MQVTQTLNEGLKRGYTITLTGAELDAKVTEKLIEVQPEVEIKGFRKGKVPMAMLRKNFGDRVLGDVLNESVDGAIKDLLDQSGDRPALQPKVEMENGKDWKPGTDAIFTVSYEALPPIPAFDRATVTLERLVVKADEASVTEALENLAKSAQAFEDRKKGTKAKDGDQVVIDFEGFLGDEPFEGGKGEEYPLVLGSNSFIPGFEDQLVGAKAGEDVEVKVTFPAEYGAAHLAGKEATFKCHVHAVKAPKPAEIDDELAKKFGAADLEALKGQVASRLEAEYKGASRAILKRALLDILDAQVKFDLPPSLVEAEAGQIAHQLWHEENPDHHGHDHGAVEPTEEHKTLAERRVRLGLLLAELGRNEKIEVTDAEMTQAVLAAARQYPGHEREFFEFVKGNAQMQQQIRAPLYEEKVIDFIVAGAAVTEKEVSKEELQKAIEALDEL.

A PPIase FKBP-type domain is found at 166 to 251 (GDQVVIDFEG…VHAVKAPKPA (86 aa)).

The protein belongs to the FKBP-type PPIase family. Tig subfamily.

It is found in the cytoplasm. It catalyses the reaction [protein]-peptidylproline (omega=180) = [protein]-peptidylproline (omega=0). Its function is as follows. Involved in protein export. Acts as a chaperone by maintaining the newly synthesized protein in an open conformation. Functions as a peptidyl-prolyl cis-trans isomerase. In Rhodobacter capsulatus (strain ATCC BAA-309 / NBRC 16581 / SB1003), this protein is Trigger factor (tig).